A 274-amino-acid polypeptide reads, in one-letter code: Triosephosphate isomerase (274 aa).

31-33 (NWK) is a substrate binding site. Histidine 118 functions as the Electrophile in the catalytic mechanism. Glutamate 188 functions as the Proton acceptor in the catalytic mechanism. Residues glycine 194, serine 234, and 255 to 256 (GG) each bind substrate.

This sequence belongs to the triosephosphate isomerase family. In terms of assembly, homodimer.

It localises to the cytoplasm. The enzyme catalyses D-glyceraldehyde 3-phosphate = dihydroxyacetone phosphate. It participates in carbohydrate biosynthesis; gluconeogenesis. The protein operates within carbohydrate degradation; glycolysis; D-glyceraldehyde 3-phosphate from glycerone phosphate: step 1/1. Its function is as follows. Involved in the gluconeogenesis. Catalyzes stereospecifically the conversion of dihydroxyacetone phosphate (DHAP) to D-glyceraldehyde-3-phosphate (G3P). This Chlamydia trachomatis serovar L2 (strain ATCC VR-902B / DSM 19102 / 434/Bu) protein is Triosephosphate isomerase.